We begin with the raw amino-acid sequence, 299 residues long: ATP phosphoribosyltransferase (299 aa).

The protein belongs to the ATP phosphoribosyltransferase family. Long subfamily. As to quaternary structure, equilibrium between an active dimeric form, an inactive hexameric form and higher aggregates. Interconversion between the various forms is largely reversible and is influenced by the natural substrates and inhibitors of the enzyme. Mg(2+) serves as cofactor.

Its subcellular location is the cytoplasm. The enzyme catalyses 1-(5-phospho-beta-D-ribosyl)-ATP + diphosphate = 5-phospho-alpha-D-ribose 1-diphosphate + ATP. It participates in amino-acid biosynthesis; L-histidine biosynthesis; L-histidine from 5-phospho-alpha-D-ribose 1-diphosphate: step 1/9. Feedback inhibited by histidine. Functionally, catalyzes the condensation of ATP and 5-phosphoribose 1-diphosphate to form N'-(5'-phosphoribosyl)-ATP (PR-ATP). Has a crucial role in the pathway because the rate of histidine biosynthesis seems to be controlled primarily by regulation of HisG enzymatic activity. In Sodalis glossinidius (strain morsitans), this protein is ATP phosphoribosyltransferase.